The chain runs to 137 residues: Large ribosomal subunit protein uL16 (137 aa).

A compositionally biased stretch (basic residues) spans 1 to 21 (MLSPKKVKFRKRQKGRLKGKA). The interval 1 to 22 (MLSPKKVKFRKRQKGRLKGKAQ) is disordered.

This sequence belongs to the universal ribosomal protein uL16 family. As to quaternary structure, part of the 50S ribosomal subunit.

Its function is as follows. Binds 23S rRNA and is also seen to make contacts with the A and possibly P site tRNAs. In Maridesulfovibrio salexigens (strain ATCC 14822 / DSM 2638 / NCIMB 8403 / VKM B-1763) (Desulfovibrio salexigens), this protein is Large ribosomal subunit protein uL16.